A 179-amino-acid polypeptide reads, in one-letter code: Large ribosomal subunit protein uL5 (179 aa).

It belongs to the universal ribosomal protein uL5 family. Part of the 50S ribosomal subunit; part of the 5S rRNA/L5/L18/L25 subcomplex. Contacts the 5S rRNA and the P site tRNA. Forms a bridge to the 30S subunit in the 70S ribosome.

In terms of biological role, this is one of the proteins that bind and probably mediate the attachment of the 5S RNA into the large ribosomal subunit, where it forms part of the central protuberance. In the 70S ribosome it contacts protein S13 of the 30S subunit (bridge B1b), connecting the 2 subunits; this bridge is implicated in subunit movement. Contacts the P site tRNA; the 5S rRNA and some of its associated proteins might help stabilize positioning of ribosome-bound tRNAs. In Lachnoclostridium phytofermentans (strain ATCC 700394 / DSM 18823 / ISDg) (Clostridium phytofermentans), this protein is Large ribosomal subunit protein uL5.